Here is a 93-residue protein sequence, read N- to C-terminus: UPF0367 protein ssl1972 (93 aa).

It belongs to the UPF0367 family.

This chain is UPF0367 protein ssl1972, found in Synechocystis sp. (strain ATCC 27184 / PCC 6803 / Kazusa).